The following is a 348-amino-acid chain: Protein RecA (348 aa).

67–74 contacts ATP; it reads GPESSGKT.

This sequence belongs to the RecA family.

The protein resides in the cytoplasm. Functionally, can catalyze the hydrolysis of ATP in the presence of single-stranded DNA, the ATP-dependent uptake of single-stranded DNA by duplex DNA, and the ATP-dependent hybridization of homologous single-stranded DNAs. It interacts with LexA causing its activation and leading to its autocatalytic cleavage. The polypeptide is Protein RecA (Amycolatopsis mediterranei (strain U-32)).